Here is a 152-residue protein sequence, read N- to C-terminus: Transcriptional regulator MraZ (152 aa).

2 consecutive SpoVT-AbrB domains span residues 5-52 (HSNR…PMPE) and 81-124 (ATEV…DQGR).

The protein belongs to the MraZ family. As to quaternary structure, forms oligomers.

The protein resides in the cytoplasm. It is found in the nucleoid. This Solidesulfovibrio magneticus (strain ATCC 700980 / DSM 13731 / RS-1) (Desulfovibrio magneticus) protein is Transcriptional regulator MraZ.